The following is a 1735-amino-acid chain: Cadherin-AgCad1 (1735 aa).

Residues M1–C30 form the signal peptide. The Extracellular segment spans residues Q31 to Q1574. The interval V166–R1456 is extracellular domain (EC). Cadherin domains lie at F171–F273, E280–I378, Y379–F498, G499–I620, T621–F757, S767–H866, E879–L983, E985–I1109, G1136–F1235, A1255–F1350, and Q1351–F1461. 2 short sequence motifs (toxin-binding receptor motif) span residues N1344–F1350 and A1446–R1456. The interval G1358 to A1569 is CR11-MPED, increases toxicity of activated Cry4B toxin, peptide alone is not toxic. The membrane-proximal EC domain (MPED) stretch occupies residues V1457–A1569. A helical transmembrane segment spans residues I1575–F1595. At F1596–F1735 the chain is on the cytoplasmic side. Residues S1701–S1719 are compositionally biased toward polar residues. Residues S1701–F1735 are disordered. The span at K1722–F1735 shows a compositional bias: basic and acidic residues.

In terms of tissue distribution, larval midgut (at protein level).

It localises to the apical cell membrane. The protein resides in the cell projection. It is found in the microvillus membrane. In terms of biological role, cadherins are calcium-dependent cell adhesion proteins. They preferentially interact with themselves in a homophilic manner in connecting cells. Functionally, (Microbial infection) Binds to and is probably the functional receptor for B.thuringiensis subsp. israelensis (Bti) insecticidal toxin Cry4B. Trichoplusia ni insect cells stably transfected with this protein become suspectible to Cry4B; cells undergo oncosis, they bleb and ruffle after 20-40 minutes, swell after 40-60 minutes and lyse after 90 minutes. Following toxin treatment in the T.in insect system levels of intracellular 3',5'-cyclic AMP (cAMP) rise 12.5-fold; EDTA but not EGTA pretreatment prevents cAMP increase. Inorganic phosphate also rises 3.4-fold after toxin treatment. The chain is Cadherin-AgCad1 from Anopheles gambiae (African malaria mosquito).